Reading from the N-terminus, the 279-residue chain is Large ribosomal subunit protein uL2 (279 aa).

A disordered region spans residues 222–264 (GVAMNPVDHPHGGGEGRTSGGRNPVTPAGKPTKGAKTRVNKAT).

This sequence belongs to the universal ribosomal protein uL2 family. In terms of assembly, part of the 50S ribosomal subunit. Forms a bridge to the 30S subunit in the 70S ribosome.

Its function is as follows. One of the primary rRNA binding proteins. Required for association of the 30S and 50S subunits to form the 70S ribosome, for tRNA binding and peptide bond formation. It has been suggested to have peptidyltransferase activity; this is somewhat controversial. Makes several contacts with the 16S rRNA in the 70S ribosome. The sequence is that of Large ribosomal subunit protein uL2 from Caulobacter sp. (strain K31).